A 22-amino-acid polypeptide reads, in one-letter code: Peptide PGLa-R1 (22 aa).

Position 22 is a leucine amide (Leu-22).

In terms of tissue distribution, expressed by the skin glands.

The protein localises to the secreted. Its function is as follows. Antimicrobial peptide. The sequence is that of Peptide PGLa-R1 from Xenopus ruwenzoriensis (Uganda clawed frog).